A 426-amino-acid polypeptide reads, in one-letter code: Synaptotagmin-13 (426 aa).

Topologically, residues 1–6 are vesicular; the sequence is MVLSVP. Residues 7–29 traverse the membrane as a helical segment; it reads VIALGATLGTATSILALCGVTCL. The Cytoplasmic portion of the chain corresponds to 30–426; that stretch reads CRHMHPKKGL…QIAMWHQLHL (397 aa). 2 C2 domains span residues 158-275 and 287-422; these read QAPK…AQWG and GTGE…AMWH.

It belongs to the synaptotagmin family. As to quaternary structure, interacts with NRXN1. As to expression, expressed in brain, spleen, kidney and testis.

It localises to the membrane. Its function is as follows. May be involved in transport vesicle docking to the plasma membrane. This Rattus norvegicus (Rat) protein is Synaptotagmin-13 (Syt13).